The sequence spans 465 residues: Probable dipeptidase A (465 aa).

Residue Cys-3 is part of the active site.

It belongs to the peptidase C69 family.

It carries out the reaction an L-aminoacyl-L-amino acid + H2O = 2 an L-alpha-amino acid. The chain is Probable dipeptidase A (pepDA) from Streptococcus pyogenes serotype M3 (strain SSI-1).